Consider the following 159-residue polypeptide: Major latex protein 149 (159 aa).

Belongs to the MLP family. Laticifer.

The protein localises to the vacuole. It is found in the cytoplasmic vesicle. In terms of biological role, not known; MLPs constitute up to 50% of the soluble latex protein. This chain is Major latex protein 149 (MLP149), found in Papaver somniferum (Opium poppy).